The following is a 532-amino-acid chain: Probable calcium-binding mitochondrial carrier CBG00135 (532 aa).

EF-hand domains are found at residues 70-105, 107-136, 137-172, and 173-208; these read EKEKKIREMYDRLDADNDGSIDIRDLTQALSSQTPH, PATMAPKLLAKMKREDSDRVTYADFTNYVI, AHEARLAEVFDQIDSNRDGEVDVSEIKSYCKEMGVN, and LDDHKALSIVKKMDQSGSSSVNLNEFQDFMLLYPST. Ca(2+)-binding residues include Asp83, Asp85, Asp87, Ser89, and Asp94. Residues Asp150, Asn152, Asp154, Glu156, and Glu161 each coordinate Ca(2+). 3 Solcar repeats span residues 243–329, 339–425, and 436–526; these read GVWW…IKRW, LTTY…LKSC, and PGVL…VRKQ. 6 helical membrane-spanning segments follow: residues 249–266, 304–323, 349–362, 400–419, 442–459, and 501–518; these read LVAGGVAGAMSRTCTAPF, GNGINVIKIAPESAMKFMSY, SSAGAISQTAIYPM, GYLPNLLGIIPYAGIDLTVY, LACGTCSSTCGQLASYPL, and GITPNFMKVIPAVSISYV.

This sequence belongs to the mitochondrial carrier (TC 2.A.29) family.

The protein resides in the mitochondrion inner membrane. Functionally, calcium-dependent mitochondrial solute carrier. In Caenorhabditis briggsae, this protein is Probable calcium-binding mitochondrial carrier CBG00135.